The sequence spans 189 residues: Glycerol-3-phosphate acyltransferase (189 aa).

The next 5 membrane-spanning stretches (helical) occupy residues 1–21 (MFWS…AIVL), 50–70 (KLAI…VLLA), 81–101 (AWVG…RFQG), 111–131 (MLMA…VLTF), and 151–171 (LLAW…LMIV).

The protein belongs to the PlsY family. As to quaternary structure, probably interacts with PlsX.

The protein localises to the cell inner membrane. It catalyses the reaction an acyl phosphate + sn-glycerol 3-phosphate = a 1-acyl-sn-glycero-3-phosphate + phosphate. Its pathway is lipid metabolism; phospholipid metabolism. Its function is as follows. Catalyzes the transfer of an acyl group from acyl-phosphate (acyl-PO(4)) to glycerol-3-phosphate (G3P) to form lysophosphatidic acid (LPA). This enzyme utilizes acyl-phosphate as fatty acyl donor, but not acyl-CoA or acyl-ACP. The sequence is that of Glycerol-3-phosphate acyltransferase from Pseudomonas entomophila (strain L48).